The primary structure comprises 807 residues: F-box protein YLR352W (807 aa).

Residues 220 to 266 (LNDCIDLPSHVLWKILKMLPELQKLDLSHTSIDDSTLYHGIPHWKNL) enclose the F-box domain. Positions 607–616 (DNNSHVEDSQ) are enriched in basic and acidic residues. 2 disordered regions span residues 607 to 647 (DNNS…NPFA) and 716 to 739 (HLFE…EHSS). Polar residues-rich tracts occupy residues 627–644 (SLLS…SSAN) and 723–736 (SRSG…LTGE).

As to quaternary structure, interacts with SKP1 and CDC53. Component of the probable SCF(YBR352W) complex containing CDC53, SKP1, RBX1 and YBR352W.

It functions in the pathway protein modification; protein ubiquitination. Its function is as follows. Substrate recognition component of a SCF (SKP1-CUL1-F-box protein) E3 ubiquitin-protein ligase complex which mediates the ubiquitination and subsequent proteasomal degradation of target proteins. Probably recognizes and binds to phosphorylated target proteins. The chain is F-box protein YLR352W from Saccharomyces cerevisiae (strain ATCC 204508 / S288c) (Baker's yeast).